A 367-amino-acid polypeptide reads, in one-letter code: Undecaprenyl-phosphate alpha-N-acetylglucosaminyl 1-phosphate transferase (367 aa).

The next 9 membrane-spanning stretches (helical) occupy residues leucine 3–leucine 23, glycine 45–leucine 65, tyrosine 69–methionine 89, tryptophan 129–isoleucine 149, isoleucine 158–tryptophan 178, methionine 187–leucine 207, valine 213–glutamate 233, isoleucine 242–methionine 262, and valine 318–isoleucine 338.

Belongs to the glycosyltransferase 4 family. WecA subfamily. Mg(2+) is required as a cofactor. Requires Mn(2+) as cofactor.

The protein localises to the cell inner membrane. It catalyses the reaction di-trans,octa-cis-undecaprenyl phosphate + UDP-N-acetyl-alpha-D-glucosamine = N-acetyl-alpha-D-glucosaminyl-di-trans,octa-cis-undecaprenyl diphosphate + UMP. It participates in bacterial outer membrane biogenesis; LPS O-antigen biosynthesis. It functions in the pathway bacterial outer membrane biogenesis; enterobacterial common antigen biosynthesis. Its function is as follows. Catalyzes the transfer of the GlcNAc-1-phosphate moiety from UDP-GlcNAc onto the carrier lipid undecaprenyl phosphate (C55-P), yielding GlcNAc-pyrophosphoryl-undecaprenyl (GlcNAc-PP-C55). The chain is Undecaprenyl-phosphate alpha-N-acetylglucosaminyl 1-phosphate transferase from Salmonella typhi.